Consider the following 443-residue polypeptide: Thymidine phosphorylase (443 aa).

Belongs to the thymidine/pyrimidine-nucleoside phosphorylase family. Homodimer.

It carries out the reaction thymidine + phosphate = 2-deoxy-alpha-D-ribose 1-phosphate + thymine. It functions in the pathway pyrimidine metabolism; dTMP biosynthesis via salvage pathway; dTMP from thymine: step 1/2. Functionally, the enzymes which catalyze the reversible phosphorolysis of pyrimidine nucleosides are involved in the degradation of these compounds and in their utilization as carbon and energy sources, or in the rescue of pyrimidine bases for nucleotide synthesis. In Shewanella putrefaciens (strain CN-32 / ATCC BAA-453), this protein is Thymidine phosphorylase.